Consider the following 452-residue polypeptide: Mannan endo-1,6-alpha-mannosidase DCW1 (452 aa).

The first 18 residues, 1–18, serve as a signal peptide directing secretion; that stretch reads MKFSIYLIISLFSSFSHA. N-linked (GlcNAc...) asparagine glycosylation is found at N25, N81, N106, N130, N200, N237, N240, N262, N271, and N286. G431 carries GPI-anchor amidated glycine lipidation. Residues 432-452 constitute a propeptide, removed in mature form; the sequence is AGIITAIIGASLVGSCVWLIL.

This sequence belongs to the glycosyl hydrolase 76 family.

The protein resides in the cell membrane. The enzyme catalyses Random hydrolysis of (1-&gt;6)-alpha-D-mannosidic linkages in unbranched (1-&gt;6)-mannans.. Its function is as follows. Probable mannosidase required for normal synthesis of the cell wall. In Candida albicans (strain SC5314 / ATCC MYA-2876) (Yeast), this protein is Mannan endo-1,6-alpha-mannosidase DCW1 (DCW1).